A 267-amino-acid polypeptide reads, in one-letter code: V-type proton ATPase subunit D (267 aa).

It belongs to the V-ATPase D subunit family. V-ATPase is a heteromultimeric enzyme composed of a peripheral catalytic V1 complex (components A to H) attached to an integral membrane V0 proton pore complex (components: a, c, c', c'', d, e, f and VOA1).

The protein resides in the vacuole membrane. In terms of biological role, subunit of the V1 complex of vacuolar(H+)-ATPase (V-ATPase), a multisubunit enzyme composed of a peripheral complex (V1) that hydrolyzes ATP and a membrane integral complex (V0) that translocates protons. V-ATPase is responsible for acidifying and maintaining the pH of intracellular compartments. This is V-type proton ATPase subunit D (VMA8) from Candida albicans (strain SC5314 / ATCC MYA-2876) (Yeast).